A 221-amino-acid chain; its full sequence is Uracil-DNA glycosylase (221 aa).

Catalysis depends on Asp-65, which acts as the Proton acceptor.

It belongs to the uracil-DNA glycosylase (UDG) superfamily. UNG family.

Its subcellular location is the cytoplasm. The catalysed reaction is Hydrolyzes single-stranded DNA or mismatched double-stranded DNA and polynucleotides, releasing free uracil.. Excises uracil residues from the DNA which can arise as a result of misincorporation of dUMP residues by DNA polymerase or due to deamination of cytosine. The chain is Uracil-DNA glycosylase from Christiangramia forsetii (strain DSM 17595 / CGMCC 1.15422 / KT0803) (Gramella forsetii).